The sequence spans 603 residues: Proline--tRNA ligase (603 aa).

Belongs to the class-II aminoacyl-tRNA synthetase family. ProS type 1 subfamily. Homodimer.

It localises to the cytoplasm. It carries out the reaction tRNA(Pro) + L-proline + ATP = L-prolyl-tRNA(Pro) + AMP + diphosphate. Catalyzes the attachment of proline to tRNA(Pro) in a two-step reaction: proline is first activated by ATP to form Pro-AMP and then transferred to the acceptor end of tRNA(Pro). As ProRS can inadvertently accommodate and process non-cognate amino acids such as alanine and cysteine, to avoid such errors it has two additional distinct editing activities against alanine. One activity is designated as 'pretransfer' editing and involves the tRNA(Pro)-independent hydrolysis of activated Ala-AMP. The other activity is designated 'posttransfer' editing and involves deacylation of mischarged Ala-tRNA(Pro). The misacylated Cys-tRNA(Pro) is not edited by ProRS. The protein is Proline--tRNA ligase of Synechocystis sp. (strain ATCC 27184 / PCC 6803 / Kazusa).